Here is a 244-residue protein sequence, read N- to C-terminus: ATP synthase subunit a (244 aa).

A run of 6 helical transmembrane segments spans residues Leu-17–Thr-37, Phe-75–Pro-95, Asp-112–Val-132, Leu-164–Leu-184, Phe-196–Phe-216, and Ser-217–Ser-237.

It belongs to the ATPase A chain family. As to quaternary structure, F-type ATPases have 2 components, CF(1) - the catalytic core - and CF(0) - the membrane proton channel. CF(1) has five subunits: alpha(3), beta(3), gamma(1), delta(1), epsilon(1). CF(0) has three main subunits: a(1), b(2) and c(9-12). The alpha and beta chains form an alternating ring which encloses part of the gamma chain. CF(1) is attached to CF(0) by a central stalk formed by the gamma and epsilon chains, while a peripheral stalk is formed by the delta and b chains.

It localises to the cell membrane. Key component of the proton channel; it plays a direct role in the translocation of protons across the membrane. The sequence is that of ATP synthase subunit a from Bacillus velezensis (strain DSM 23117 / BGSC 10A6 / LMG 26770 / FZB42) (Bacillus amyloliquefaciens subsp. plantarum).